Reading from the N-terminus, the 488-residue chain is ATP synthase subunit beta (488 aa).

164-171 is an ATP binding site; that stretch reads GGAGVGKT.

The protein belongs to the ATPase alpha/beta chains family. As to quaternary structure, F-type ATPases have 2 components, CF(1) - the catalytic core - and CF(0) - the membrane proton channel. CF(1) has five subunits: alpha(3), beta(3), gamma(1), delta(1), epsilon(1). CF(0) has four main subunits: a(1), b(1), b'(1) and c(9-12).

The protein localises to the cellular thylakoid membrane. It carries out the reaction ATP + H2O + 4 H(+)(in) = ADP + phosphate + 5 H(+)(out). In terms of biological role, produces ATP from ADP in the presence of a proton gradient across the membrane. The catalytic sites are hosted primarily by the beta subunits. The chain is ATP synthase subunit beta from Prochlorococcus marinus (strain MIT 9303).